Consider the following 290-residue polypeptide: 4-hydroxy-3-methylbut-2-enyl diphosphate reductase (290 aa).

Position 12 (C12) interacts with [4Fe-4S] cluster. Residues H50 and H83 each coordinate (2E)-4-hydroxy-3-methylbut-2-enyl diphosphate. 2 residues coordinate dimethylallyl diphosphate: H50 and H83. Residues H50 and H83 each coordinate isopentenyl diphosphate. C105 contributes to the [4Fe-4S] cluster binding site. H133 contributes to the (2E)-4-hydroxy-3-methylbut-2-enyl diphosphate binding site. H133 contributes to the dimethylallyl diphosphate binding site. Residue H133 participates in isopentenyl diphosphate binding. Catalysis depends on E135, which acts as the Proton donor. Residue T173 coordinates (2E)-4-hydroxy-3-methylbut-2-enyl diphosphate. C202 serves as a coordination point for [4Fe-4S] cluster. (2E)-4-hydroxy-3-methylbut-2-enyl diphosphate contacts are provided by S230, N232, and S274. Residues S230, N232, and S274 each contribute to the dimethylallyl diphosphate site. Residues S230, N232, and S274 each contribute to the isopentenyl diphosphate site.

Belongs to the IspH family. The cofactor is [4Fe-4S] cluster.

It carries out the reaction isopentenyl diphosphate + 2 oxidized [2Fe-2S]-[ferredoxin] + H2O = (2E)-4-hydroxy-3-methylbut-2-enyl diphosphate + 2 reduced [2Fe-2S]-[ferredoxin] + 2 H(+). It catalyses the reaction dimethylallyl diphosphate + 2 oxidized [2Fe-2S]-[ferredoxin] + H2O = (2E)-4-hydroxy-3-methylbut-2-enyl diphosphate + 2 reduced [2Fe-2S]-[ferredoxin] + 2 H(+). The protein operates within isoprenoid biosynthesis; dimethylallyl diphosphate biosynthesis; dimethylallyl diphosphate from (2E)-4-hydroxy-3-methylbutenyl diphosphate: step 1/1. It participates in isoprenoid biosynthesis; isopentenyl diphosphate biosynthesis via DXP pathway; isopentenyl diphosphate from 1-deoxy-D-xylulose 5-phosphate: step 6/6. Catalyzes the conversion of 1-hydroxy-2-methyl-2-(E)-butenyl 4-diphosphate (HMBPP) into a mixture of isopentenyl diphosphate (IPP) and dimethylallyl diphosphate (DMAPP). Acts in the terminal step of the DOXP/MEP pathway for isoprenoid precursor biosynthesis. This Nitratidesulfovibrio vulgaris (strain ATCC 29579 / DSM 644 / CCUG 34227 / NCIMB 8303 / VKM B-1760 / Hildenborough) (Desulfovibrio vulgaris) protein is 4-hydroxy-3-methylbut-2-enyl diphosphate reductase.